Consider the following 268-residue polypeptide: 4-hydroxy-tetrahydrodipicolinate reductase (268 aa).

NAD(+) is bound by residues 8–13 (GGGGKM) and Glu34. NADP(+) is bound at residue Lys35. Residues 98–100 (GST) and 122–125 (APNM) each bind NAD(+). His155 serves as the catalytic Proton donor/acceptor. Position 156 (His156) interacts with (S)-2,3,4,5-tetrahydrodipicolinate. Lys159 acts as the Proton donor in catalysis. 165 to 166 (GT) lines the (S)-2,3,4,5-tetrahydrodipicolinate pocket.

This sequence belongs to the DapB family.

The protein resides in the cytoplasm. It carries out the reaction (S)-2,3,4,5-tetrahydrodipicolinate + NAD(+) + H2O = (2S,4S)-4-hydroxy-2,3,4,5-tetrahydrodipicolinate + NADH + H(+). It catalyses the reaction (S)-2,3,4,5-tetrahydrodipicolinate + NADP(+) + H2O = (2S,4S)-4-hydroxy-2,3,4,5-tetrahydrodipicolinate + NADPH + H(+). It functions in the pathway amino-acid biosynthesis; L-lysine biosynthesis via DAP pathway; (S)-tetrahydrodipicolinate from L-aspartate: step 4/4. Catalyzes the conversion of 4-hydroxy-tetrahydrodipicolinate (HTPA) to tetrahydrodipicolinate. The protein is 4-hydroxy-tetrahydrodipicolinate reductase of Syntrophus aciditrophicus (strain SB).